An 865-amino-acid polypeptide reads, in one-letter code: Probable beta-glucosidase J (865 aa).

The active site involves Asp233. Asn330, Asn447, Asn503, and Asn764 each carry an N-linked (GlcNAc...) asparagine glycan. The PA14 domain occupies 411–579 (TGQPGYTFRV…DTDTAIQQAV (169 aa)).

The protein belongs to the glycosyl hydrolase 3 family.

It is found in the secreted. It carries out the reaction Hydrolysis of terminal, non-reducing beta-D-glucosyl residues with release of beta-D-glucose.. The protein operates within glycan metabolism; cellulose degradation. Beta-glucosidases are one of a number of cellulolytic enzymes involved in the degradation of cellulosic biomass. Catalyzes the last step releasing glucose from the inhibitory cellobiose. This chain is Probable beta-glucosidase J (bglJ), found in Aspergillus fumigatus (strain ATCC MYA-4609 / CBS 101355 / FGSC A1100 / Af293) (Neosartorya fumigata).